A 227-amino-acid chain; its full sequence is ATP-dependent dethiobiotin synthetase BioD (227 aa).

An ATP-binding site is contributed by 12–17 (DVGKTV). Thr-16 is a binding site for Mg(2+). Residue Lys-37 is part of the active site. Residue Thr-41 coordinates substrate. Residues Asp-50, 110 to 113 (EGAG), 171 to 172 (GS), and 201 to 203 (PAG) contribute to the ATP site. 2 residues coordinate Mg(2+): Asp-50 and Glu-110.

This sequence belongs to the dethiobiotin synthetase family. In terms of assembly, homodimer. Mg(2+) is required as a cofactor.

The protein localises to the cytoplasm. It catalyses the reaction (7R,8S)-7,8-diammoniononanoate + CO2 + ATP = (4R,5S)-dethiobiotin + ADP + phosphate + 3 H(+). Its pathway is cofactor biosynthesis; biotin biosynthesis; biotin from 7,8-diaminononanoate: step 1/2. Its function is as follows. Catalyzes a mechanistically unusual reaction, the ATP-dependent insertion of CO2 between the N7 and N8 nitrogen atoms of 7,8-diaminopelargonic acid (DAPA, also called 7,8-diammoniononanoate) to form a ureido ring. The chain is ATP-dependent dethiobiotin synthetase BioD from Rhodococcus erythropolis (strain PR4 / NBRC 100887).